Reading from the N-terminus, the 244-residue chain is tRNA (guanine-N(1)-)-methyltransferase (244 aa).

Residues glycine 120 and 140 to 145 each bind S-adenosyl-L-methionine; that span reads IGDYIL.

The protein belongs to the RNA methyltransferase TrmD family. In terms of assembly, homodimer.

Its subcellular location is the cytoplasm. It carries out the reaction guanosine(37) in tRNA + S-adenosyl-L-methionine = N(1)-methylguanosine(37) in tRNA + S-adenosyl-L-homocysteine + H(+). Its function is as follows. Specifically methylates guanosine-37 in various tRNAs. The protein is tRNA (guanine-N(1)-)-methyltransferase of Brucella canis (strain ATCC 23365 / NCTC 10854 / RM-666).